The following is a 117-amino-acid chain: Large ribosomal subunit protein uL18 (117 aa).

This sequence belongs to the universal ribosomal protein uL18 family. As to quaternary structure, part of the 50S ribosomal subunit; part of the 5S rRNA/L5/L18/L25 subcomplex. Contacts the 5S and 23S rRNAs.

Its function is as follows. This is one of the proteins that bind and probably mediate the attachment of the 5S RNA into the large ribosomal subunit, where it forms part of the central protuberance. The polypeptide is Large ribosomal subunit protein uL18 (Aliivibrio fischeri (strain ATCC 700601 / ES114) (Vibrio fischeri)).